Reading from the N-terminus, the 293-residue chain is 33 kDa chaperonin (293 aa).

2 disulfide bridges follow: cysteine 238-cysteine 240 and cysteine 271-cysteine 274.

This sequence belongs to the HSP33 family. Under oxidizing conditions two disulfide bonds are formed involving the reactive cysteines. Under reducing conditions zinc is bound to the reactive cysteines and the protein is inactive.

It is found in the cytoplasm. Its function is as follows. Redox regulated molecular chaperone. Protects both thermally unfolding and oxidatively damaged proteins from irreversible aggregation. Plays an important role in the bacterial defense system toward oxidative stress. The protein is 33 kDa chaperonin of Staphylococcus aureus (strain USA300).